The chain runs to 250 residues: 2,3-bisphosphoglycerate-dependent phosphoglycerate mutase (250 aa).

Substrate is bound by residues 10-17, 23-24, R62, 89-92, K100, 116-117, and 185-186; these read RHGESQWN, TG, ERHY, RR, and GN. The active-site Tele-phosphohistidine intermediate is H11. Catalysis depends on E89, which acts as the Proton donor/acceptor.

It belongs to the phosphoglycerate mutase family. BPG-dependent PGAM subfamily. As to quaternary structure, homodimer.

It catalyses the reaction (2R)-2-phosphoglycerate = (2R)-3-phosphoglycerate. The protein operates within carbohydrate degradation; glycolysis; pyruvate from D-glyceraldehyde 3-phosphate: step 3/5. Catalyzes the interconversion of 2-phosphoglycerate and 3-phosphoglycerate. This Serratia proteamaculans (strain 568) protein is 2,3-bisphosphoglycerate-dependent phosphoglycerate mutase.